The primary structure comprises 286 residues: Pyridoxal kinase PdxY (286 aa).

Residues S9 and 44–45 contribute to the substrate site; that span reads TQ. ATP contacts are provided by D111, E148, and K181. Position 222 (D222) interacts with substrate.

The protein belongs to the pyridoxine kinase family. PdxY subfamily. Homodimer. Mg(2+) serves as cofactor.

It catalyses the reaction pyridoxal + ATP = pyridoxal 5'-phosphate + ADP + H(+). Its pathway is cofactor metabolism; pyridoxal 5'-phosphate salvage; pyridoxal 5'-phosphate from pyridoxal: step 1/1. In terms of biological role, pyridoxal kinase involved in the salvage pathway of pyridoxal 5'-phosphate (PLP). Catalyzes the phosphorylation of pyridoxal to PLP. In Pasteurella multocida (strain Pm70), this protein is Pyridoxal kinase PdxY.